Consider the following 219-residue polypeptide: Phosphatidylinositol phosphate synthase (219 aa).

Position 29 to 32 (29 to 32 (NQLT)) interacts with a CDP-1,2-diacyl-sn-glycerol. 2 helical membrane passes run 31-47 (LTLV…LLLI) and 53-72 (IWAA…DGTV). Mg(2+) contacts are provided by Asp-66 and Asp-69. A CDP-1,2-diacyl-sn-glycerol contacts are provided by Gly-70, Arg-74, and Thr-80. 2 residues coordinate Mg(2+): Asp-87 and Asp-91. Asp-91 functions as the Proton acceptor in the catalytic mechanism. 4 helical membrane passes run 93-110 (ITDG…VYSY), 116-133 (LVAA…ISYV), 154-171 (RLIV…GVPY), and 177-194 (LWAL…RLVM).

Belongs to the CDP-alcohol phosphatidyltransferase class-I family. In terms of assembly, homodimer. Mg(2+) serves as cofactor.

The protein localises to the cell membrane. The catalysed reaction is a CDP-1,2-diacyl-sn-glycerol + 1D-myo-inositol 3-phosphate = a 1,2-diacyl-sn-glycero-3-phospho-(1D-myo-inositol-3-phosphate) + CMP + H(+). The enzyme catalyses 1,2-di-(9Z-octadecenoyl)-sn-glycero-3-cytidine-5'-diphosphate + 1D-myo-inositol 3-phosphate = 1,2-di-(9Z-octadecenoyl)-sn-glycero-3-phospho-(1D-myo-inositol-3-phosphate) + CMP + H(+). It functions in the pathway phospholipid metabolism; phosphatidylinositol phosphate biosynthesis. In terms of biological role, catalyzes the conjugation of the 1'-hydroxyl group of D-myo-inositol-3-phosphate (also named L-myo-inositol-1-phosphate) with a lipid tail of cytidine diphosphate diacylglycerol (CDP-DAG), forming phosphatidylinositol phosphate (PIP) and CMP. PIP is a precursor of phosphatidylinositol (PI) which is an essential lipid required for cell wall formation. This Corynebacterium glutamicum (strain ATCC 13032 / DSM 20300 / JCM 1318 / BCRC 11384 / CCUG 27702 / LMG 3730 / NBRC 12168 / NCIMB 10025 / NRRL B-2784 / 534) protein is Phosphatidylinositol phosphate synthase.